The primary structure comprises 719 residues: MLKLVQYIAPRVGGATPRPTACGWGNLLLISPRSGASSEKCITQRRHFLFSSASSSGTFASSSSLCTEQRQQFHGSRRNRETILFPSTYSSLQAQSQRAFRDSSKPDSDDYVDSIPKAEQRTRTRKSLFNDPDERTEEIKIEGVMAPHDRDFGHSGRGGRGGDRGGDDRRGGGGGGNRFGGGGGGGDYHGIRNGRVEKRRDDRGGGNRFGGGGGFGDRRGGGGGGSQDLPMRPVDFSNLAPFKKNFYQEHPNVANRSPYEVQRYREEQEITVRGQVPNPIQDFSEVHLPDYVMKEIRRQGYKAPTAIQAQGWPIAMSGSNFVGIAKTGSGKTLGYILPAIVHINNQQPLQRGDGPIALVLAPTRELAQQIQQVATEFGSSSYVRNTCVFGGAPKGGQMRDLQRGCEIVIATPGRLIDFLSAGSTNLKRCTYLVLDEADRMLDMGFEPQIRKIVSQIRPDRQTLMWSATWPKEVKQLAEDFLGNYIQINIGSLELSANHNIRQVVDVCDEFSKEEKLKTLLSDIYDTSESPGKIIIFVETKRRVDNLVRFIRSFGVRCGAIHGDKSQSERDFVLREFRSGKSNILVATDVAARGLDVDGIKYVINFDYPQNSEDYIHRIGRTGRSNTKGTSFAFFTKNNAKQAKALVDVLREANQEINPALENLARNSRYDGGGGRSRYGGGGGGGRFGGGGFKKGSLSNGRGFGGGGGGGGEGRHSRFD.

Residues 94 to 234 (AQSQRAFRDS…GSQDLPMRPV (141 aa)) form a disordered region. 2 stretches are compositionally biased toward basic and acidic residues: residues 99–108 (AFRDSSKPDS) and 137–171 (EEIK…DRRG). Over residues 172–188 (GGGGGNRFGGGGGGGDY) the composition is skewed to gly residues. Residues 194-205 (GRVEKRRDDRGG) show a composition bias toward basic and acidic residues. Over residues 206-226 (GNRFGGGGGFGDRRGGGGGGS) the composition is skewed to gly residues. Residues 281–309 (QDFSEVHLPDYVMKEIRRQGYKAPTAIQA) carry the Q motif motif. A Helicase ATP-binding domain is found at 312-487 (WPIAMSGSNF…EDFLGNYIQI (176 aa)). Residue 325–332 (AKTGSGKT) coordinates ATP. A DEAD box motif is present at residues 435–438 (DEAD). The region spanning 519 to 664 (LLSDIYDTSE…EINPALENLA (146 aa)) is the Helicase C-terminal domain. Positions 689 to 719 (GGGFKKGSLSNGRGFGGGGGGGGEGRHSRFD) are disordered. A compositionally biased stretch (gly residues) spans 701–711 (RGFGGGGGGGG).

Belongs to the DEAD box helicase family. DDX5/DBP2 subfamily. Interacts with Fmr1 to form the RNA-induced silencing complex (RISC), a ribonucleoprotein (RNP) complex involved in translation regulation, other components of the complex are RpL5, RpL11, AGO2 and Dcr-1.

The protein resides in the nucleus. It is found in the nucleolus. It localises to the cytoplasm. Its subcellular location is the cytosol. It catalyses the reaction ATP + H2O = ADP + phosphate + H(+). As an RNA helicase, unwinds RNA and alters RNA structures through ATP binding and hydrolysis. Involved in multiple cellular processes, including pre-mRNA splicing, alternative splicing, rRNA processing and miRNA processing, as well as transcription regulation. Plays a role in innate immunity. Specifically restricts bunyavirus infection, including Rift Valley fever virus (RVFV) or La Crosse virus (LACV), but not vesicular stomatitis virus (VSV), in an interferon- and DROSHA-independent manner. The protein is ATP-dependent RNA helicase p62 (Rm62) of Drosophila melanogaster (Fruit fly).